Here is a 195-residue protein sequence, read N- to C-terminus: MKIIIIDTACANLASLKFCLDRLGFNATISRDLKELESADKLFLPGVGTAKEAMKNLEQFNLIDFIQNTKKPLLGICLGMQILGNFSEELNQETLKLIDFTTQKFKAKEGFTFPHMGWNEVYSSHALFKGLEGAYFYFVHSYCVGLGKYTIADCEYSQKFSASVMKDNFYGVQFHPERSSEAGEILISNFIKDIG.

A Glutamine amidotransferase type-1 domain is found at 2 to 195; it reads KIIIIDTACA…LISNFIKDIG (194 aa). Residue cysteine 77 is the Nucleophile of the active site. Catalysis depends on residues histidine 175 and glutamate 177.

As to quaternary structure, heterodimer of HisH and HisF.

The protein resides in the cytoplasm. The enzyme catalyses 5-[(5-phospho-1-deoxy-D-ribulos-1-ylimino)methylamino]-1-(5-phospho-beta-D-ribosyl)imidazole-4-carboxamide + L-glutamine = D-erythro-1-(imidazol-4-yl)glycerol 3-phosphate + 5-amino-1-(5-phospho-beta-D-ribosyl)imidazole-4-carboxamide + L-glutamate + H(+). The catalysed reaction is L-glutamine + H2O = L-glutamate + NH4(+). Its pathway is amino-acid biosynthesis; L-histidine biosynthesis; L-histidine from 5-phospho-alpha-D-ribose 1-diphosphate: step 5/9. Functionally, IGPS catalyzes the conversion of PRFAR and glutamine to IGP, AICAR and glutamate. The HisH subunit provides the glutamine amidotransferase activity that produces the ammonia necessary to HisF for the synthesis of IGP and AICAR. The protein is Imidazole glycerol phosphate synthase subunit HisH 2 (hisH2) of Campylobacter jejuni subsp. jejuni serotype O:2 (strain ATCC 700819 / NCTC 11168).